Reading from the N-terminus, the 502-residue chain is Cytochrome P450 71B19 (502 aa).

The chain crosses the membrane as a helical span at residues 1–21 (MAISFLCVFLITFVSLIFFAK). Cys444 is a binding site for heme.

Belongs to the cytochrome P450 family. Heme is required as a cofactor.

Its subcellular location is the membrane. The protein is Cytochrome P450 71B19 (CYP71B19) of Arabidopsis thaliana (Mouse-ear cress).